Consider the following 883-residue polypeptide: MSRQSSITVTVRVRPFSTAESANLIASSDRLSFGTSSSLRNPGSGRQIRRVVKVLDGRVLVFDPPDETTATLSATNRRLSTSQQSLARLSRKSNNSAGFGRDLRYAFDRVFDETATQQQVYERTARPLLDNILDGFNATIFAYGATGCGKTHTISGTMQDPGLIYLTLKELFERMDHLRDEKIFDLRLSYLEIYNETIRDLLVSPTPNQAKPLNLREDADRRITVPGLTSLSPESLEEIIDIIMKGNANRTMSPTEANAASSRSHAVLQVTLIQKPRTAGINEDHTLATLSIIDLAGSERATATKLRGSRLFEGANINKSLLALGNCINALCDPHRRAHVPYRDSKLTRLLKFSLGGNCRTVMIVCVSPSSVHYEETHNTLKYANRAKNIKTEVLRNMISVDRHVSQYVKAIVELREQISELENRLAQIDLSSQSNGSDQDAVTQSFAHESKLAEARNLLRMTFEETLPLQNDTINKVEKVKHFDDSIRVLKYWLSCYERILPNSADERVFLVRSKLESLLTRRAEIIADIDPELVYQKFQRSVSHIINTYKQEGATMYADVLQDEVDLLKSIIENQVLDAQNKVDEFTPVLESLLRSSFKASSLLKEGGMQELFSILEKWLLGIGLGEKPNISVLSESYKLNSTSDDSRTINRDRVHSFPTQPLLNNNLPRMFFVKSPKKPVVFSKRSPKKRVRFDDSMSTSDSGASAYNSPIQTSKLKNMNFFNTMHMPSTPAHKRPENKNQIDVEINLTSPVSPMLEDKPEPGLLIKSPLEKKQEVNSESTQLDQLLAEDSSTDDVSLPHLDTIDLDGSPVPKVPDLNFSRANMDSPTFILNNEAIHNFDFSKPKTRQSLSSLTTLHLSNPANIIRKSLSMAENEEEKAT.

The region spanning 6 to 390 (SITVTVRVRP…LKYANRAKNI (385 aa)) is the Kinesin motor domain. Position 144–151 (144–151 (GATGCGKT)) interacts with ATP. Coiled-coil stretches lie at residues 396–435 (RNMI…SSQS) and 563–588 (LQDE…VDEF). Residues 755–785 (VSPMLEDKPEPGLLIKSPLEKKQEVNSESTQ) form a disordered region.

The protein belongs to the TRAFAC class myosin-kinesin ATPase superfamily. Kinesin family. Kinesin II subfamily. In terms of assembly, heterodimer with klp6.

Its subcellular location is the cytoplasm. The protein localises to the cytoskeleton. It localises to the chromosome. It is found in the centromere. The protein resides in the kinetochore. Its subcellular location is the spindle. Has a role in establishing metaphase during mitosis. Required for chromosome segregation where it generates tension during kinetochore capturing. In Schizosaccharomyces pombe (strain 972 / ATCC 24843) (Fission yeast), this protein is Kinesin-like protein 5 (klp5).